The primary structure comprises 545 residues: 2-oxo-Delta(3)-4,5,5-trimethylcyclopentenylacetyl-CoA monooxygenase (545 aa).

Residues T20, E39, T47–W50, D59–T60, Y65, and V112 contribute to the FAD site. R57 to D59 provides a ligand contact to NADP(+). NADP(+) is bound by residues T193–Q199 and R216–T217. An FAD-binding site is contributed by V446. W501 serves as a coordination point for NADP(+).

It belongs to the FAD-binding monooxygenase family. Homodimer. FAD is required as a cofactor.

The enzyme catalyses [(1R)-2,2,3-trimethyl-5-oxocyclopent-3-enyl]acetyl-CoA + NADPH + O2 + H(+) = [(2R)-3,3,4-trimethyl-6-oxo-3,6-dihydro-1H-pyran-2-yl]acetyl-CoA + NADP(+) + H2O. The protein operates within terpene metabolism; (R)-camphor degradation. In terms of biological role, involved in the degradation of (+)-camphor. Catalyzes the lactonization of 2-oxo-delta(3)-4,5, 5-trimethylcyclopentenylacetyl-CoA (OT-CoA), a key intermediate in the metabolism of camphor. 2-Oxocyclopentyl ethyl acetate is also a good substrate, as is 2-oxocyclohexyl ethyl acetate and methyl-substituted cyclohexanones, but free acid is a poor substrate. This Pseudomonas putida (Arthrobacter siderocapsulatus) protein is 2-oxo-Delta(3)-4,5,5-trimethylcyclopentenylacetyl-CoA monooxygenase (otemo).